Reading from the N-terminus, the 95-residue chain is Enhancer of yellow 2 transcription factor (95 aa).

Belongs to the ENY2 family. Component of the nuclear pore complex (NPC)-associated AMEX complex (anchoring and mRNA export complex), composed of at least e(y)2 and xmas-2. Component of the SAGA transcription coactivator-HAT complexes, at least composed of Ada2b, e(y)2, Pcaf/Gcn5, Taf10 and Nipped-A/Trrap. Within the SAGA complex, e(y)2, Sgf11, and not/nonstop form an additional subcomplex of SAGA called the DUB module (deubiquitination module). Component of the THO complex, composed of at least e(y)2, HPR1, THO2, THOC5, THOC6 and THOC7. Interacts with e(y)1. Interacts with su(Hw) (via zinc fingers). Interacts with xmas-2; required for localization to the nuclear periphery. Interacts with the nuclear pore complex (NPC).

The protein localises to the nucleus. Its subcellular location is the nucleoplasm. It localises to the cytoplasm. In terms of biological role, involved in mRNA export coupled transcription activation by association with both the AMEX and the SAGA complexes. The SAGA complex is a multiprotein complex that activates transcription by remodeling chromatin and mediating histone acetylation and deubiquitination. Within the SAGA complex, participates in a subcomplex that specifically deubiquitinates histone H2B. The SAGA complex is recruited to specific gene promoters by activators, where it is required for transcription. Required for nuclear receptor-mediated transactivation. Involved in transcription elongation by recruiting the THO complex onto nascent mRNA. The AMEX complex functions in docking export-competent ribonucleoprotein particles (mRNPs) to the nuclear entrance of the nuclear pore complex (nuclear basket). AMEX participates in mRNA export and accurate chromatin positioning in the nucleus by tethering genes to the nuclear periphery. This is Enhancer of yellow 2 transcription factor from Drosophila virilis (Fruit fly).